A 129-amino-acid polypeptide reads, in one-letter code: DNA-directed RNA polymerase II subunit RPB9 (129 aa).

Residues Cys-21, Cys-24, Cys-43, Cys-46, Cys-90, Cys-93, Cys-118, and Cys-123 each contribute to the Zn(2+) site. The C4-type zinc-finger motif lies at 21 to 46; that stretch reads CQECNNMLYPKEDKENKILLYACRNC. The segment at 86–128 adopts a TFIIS-type zinc-finger fold; sequence EDHACPKCSHREAVFFQAQTRRAEEEMRLYYVCTNQNCTHRWT.

Belongs to the archaeal RpoM/eukaryotic RPA12/RPB9/RPC11 RNA polymerase family. In terms of assembly, component of the RNA polymerase II (Pol II) complex consisting of 12 subunits.

The protein localises to the nucleus. The protein resides in the nucleolus. Its function is as follows. DNA-dependent RNA polymerase catalyzes the transcription of DNA into RNA using the four ribonucleoside triphosphates as substrates. Component of RNA polymerase II which synthesizes mRNA precursors and many functional non-coding RNAs. Pol II is the central component of the basal RNA polymerase II transcription machinery. It is composed of mobile elements that move relative to each other. RPB9 is part of the upper jaw surrounding the central large cleft and thought to grab the incoming DNA template. The polypeptide is DNA-directed RNA polymerase II subunit RPB9 (Drosophila melanogaster (Fruit fly)).